The sequence spans 170 residues: Photosystem I assembly protein Ycf3 (170 aa).

TPR repeat units lie at residues 35-69 (AFTY…EIDP), 73-106 (SYIL…NPSL), and 121-154 (GEQA…APGN).

The protein belongs to the Ycf3 family.

The protein resides in the plastid. Its subcellular location is the chloroplast thylakoid membrane. Its function is as follows. Essential for the assembly of the photosystem I (PSI) complex. May act as a chaperone-like factor to guide the assembly of the PSI subunits. This Cycas taitungensis (Prince sago) protein is Photosystem I assembly protein Ycf3.